The chain runs to 564 residues: Keratin, type II cytoskeletal 6B (564 aa).

A compositionally biased stretch (low complexity) spans 1-11 (MASTSTTIRSH). The tract at residues 1-23 (MASTSTTIRSHSSSRRGFSANSA) is disordered. Position 2 is an N-acetylalanine (A2). The segment at 2–162 (ASTSTTIRSH…DPAIQRVRAE (161 aa)) is head. A coil 1A region spans residues 163–198 (EREQIKTLNNKFASFIDKVRFLEQQNKVLDTKWTLL). The IF rod domain occupies 163–476 (EREQIKTLNN…KLLEGEECRL (314 aa)). Residues 199–217 (QEQGTKTVRQNLEPLFEQY) form a linker 1 region. The segment at 218-309 (INNLRRQLDN…ALYDAELSQM (92 aa)) is coil 1B. Residues 310–333 (QTHISDTSVVLSMDNNRNLDLDSI) are linker 12. The tract at residues 334-472 (IAEVKAQYEE…ATYRKLLEGE (139 aa)) is coil 2. Residues 473–564 (ECRLNGEGVG…SSSSRKSYKH (92 aa)) form a tail region. The interval 533–564 (RATGGGLSSVGGGSSTIKYTTTSSSSRKSYKH) is disordered. Gly residues predominate over residues 534–546 (ATGGGLSSVGGGS). A compositionally biased stretch (low complexity) spans 547–564 (STIKYTTTSSSSRKSYKH).

The protein belongs to the intermediate filament family. In terms of assembly, heterodimer of a type I and a type II keratin. KRT6 isomers associate with KRT16 and/or KRT17. In terms of tissue distribution, constitutively expressed in distinct types of epithelia such as those in oral mucosa, esophagus, papillae of tongue and hair follicle outer root sheath.

The sequence is that of Keratin, type II cytoskeletal 6B (KRT6B) from Homo sapiens (Human).